Reading from the N-terminus, the 70-residue chain is Large ribosomal subunit protein eL38 (70 aa).

It belongs to the eukaryotic ribosomal protein eL38 family.

This is Large ribosomal subunit protein eL38 (RpL38) from Aedes aegypti (Yellowfever mosquito).